Here is a 139-residue protein sequence, read N- to C-terminus: Large ribosomal subunit protein bL17 (139 aa).

The tract at residues 120–139 is disordered; that stretch reads ESAKGQDSGPVHVEGDEEAA.

This sequence belongs to the bacterial ribosomal protein bL17 family. As to quaternary structure, part of the 50S ribosomal subunit. Contacts protein L32.

In Parvibaculum lavamentivorans (strain DS-1 / DSM 13023 / NCIMB 13966), this protein is Large ribosomal subunit protein bL17.